Consider the following 140-residue polypeptide: MTKQRTLSIIKPDAVEKNVIGEIYSRFEKAGLRIIAAKMKHLSKAEAEGFYAVHKDRPFFSALVEFMISGPVIIQVLEGENAIAKNRELMGATNPKEAKAGTIRADFADSIDANAVHGSDAEDTAAQEIRYFFSDTEIFG.

Residues Lys-11, Phe-59, Arg-87, Thr-93, Arg-104, and Asn-114 each contribute to the ATP site. Catalysis depends on His-117, which acts as the Pros-phosphohistidine intermediate.

It belongs to the NDK family. Homotetramer. Mg(2+) is required as a cofactor.

The protein localises to the cytoplasm. It carries out the reaction a 2'-deoxyribonucleoside 5'-diphosphate + ATP = a 2'-deoxyribonucleoside 5'-triphosphate + ADP. The enzyme catalyses a ribonucleoside 5'-diphosphate + ATP = a ribonucleoside 5'-triphosphate + ADP. Major role in the synthesis of nucleoside triphosphates other than ATP. The ATP gamma phosphate is transferred to the NDP beta phosphate via a ping-pong mechanism, using a phosphorylated active-site intermediate. This is Nucleoside diphosphate kinase from Francisella tularensis subsp. mediasiatica (strain FSC147).